A 271-amino-acid polypeptide reads, in one-letter code: Formamidopyrimidine-DNA glycosylase (271 aa).

Pro-2 functions as the Schiff-base intermediate with DNA in the catalytic mechanism. Glu-3 acts as the Proton donor in catalysis. Residue Lys-58 is the Proton donor; for beta-elimination activity of the active site. Residues His-92, Arg-111, and Arg-152 each coordinate DNA. The segment at 237-271 adopts an FPG-type zinc-finger fold; it reads TVYGREGEPCKQCGRVLKHAMIGQRATVWCGSCQR. The active-site Proton donor; for delta-elimination activity is Arg-261.

Belongs to the FPG family. In terms of assembly, monomer. It depends on Zn(2+) as a cofactor.

The catalysed reaction is Hydrolysis of DNA containing ring-opened 7-methylguanine residues, releasing 2,6-diamino-4-hydroxy-5-(N-methyl)formamidopyrimidine.. The enzyme catalyses 2'-deoxyribonucleotide-(2'-deoxyribose 5'-phosphate)-2'-deoxyribonucleotide-DNA = a 3'-end 2'-deoxyribonucleotide-(2,3-dehydro-2,3-deoxyribose 5'-phosphate)-DNA + a 5'-end 5'-phospho-2'-deoxyribonucleoside-DNA + H(+). Functionally, involved in base excision repair of DNA damaged by oxidation or by mutagenic agents. Acts as a DNA glycosylase that recognizes and removes damaged bases. Has a preference for oxidized purines, such as 7,8-dihydro-8-oxoguanine (8-oxoG). Has AP (apurinic/apyrimidinic) lyase activity and introduces nicks in the DNA strand. Cleaves the DNA backbone by beta-delta elimination to generate a single-strand break at the site of the removed base with both 3'- and 5'-phosphates. This is Formamidopyrimidine-DNA glycosylase from Xanthomonas oryzae pv. oryzae (strain MAFF 311018).